The sequence spans 402 residues: 26S proteasome regulatory subunit 8 (402 aa).

ATP is bound at residue 186–193 (GPPGTGKT).

It belongs to the AAA ATPase family.

It localises to the cytoplasm. It is found in the nucleus. Its function is as follows. The 26S proteasome is involved in the ATP-dependent degradation of ubiquitinated proteins. The regulatory (or ATPase) complex confers ATP dependency and substrate specificity to the 26S complex. The chain is 26S proteasome regulatory subunit 8 from Manduca sexta (Tobacco hawkmoth).